Here is a 226-residue protein sequence, read N- to C-terminus: 2-C-methyl-D-erythritol 4-phosphate cytidylyltransferase (226 aa).

The protein belongs to the IspD/TarI cytidylyltransferase family. IspD subfamily.

The catalysed reaction is 2-C-methyl-D-erythritol 4-phosphate + CTP + H(+) = 4-CDP-2-C-methyl-D-erythritol + diphosphate. The protein operates within isoprenoid biosynthesis; isopentenyl diphosphate biosynthesis via DXP pathway; isopentenyl diphosphate from 1-deoxy-D-xylulose 5-phosphate: step 2/6. Functionally, catalyzes the formation of 4-diphosphocytidyl-2-C-methyl-D-erythritol from CTP and 2-C-methyl-D-erythritol 4-phosphate (MEP). This is 2-C-methyl-D-erythritol 4-phosphate cytidylyltransferase from Bacillus cytotoxicus (strain DSM 22905 / CIP 110041 / 391-98 / NVH 391-98).